The primary structure comprises 185 residues: Elongation factor P (185 aa).

It belongs to the elongation factor P family.

It localises to the cytoplasm. It functions in the pathway protein biosynthesis; polypeptide chain elongation. In terms of biological role, involved in peptide bond synthesis. Stimulates efficient translation and peptide-bond synthesis on native or reconstituted 70S ribosomes in vitro. Probably functions indirectly by altering the affinity of the ribosome for aminoacyl-tRNA, thus increasing their reactivity as acceptors for peptidyl transferase. This is Elongation factor P from Desulfitobacterium hafniense (strain DSM 10664 / DCB-2).